The sequence spans 197 residues: Segregation and condensation protein B (197 aa).

Belongs to the ScpB family. In terms of assembly, homodimer. Homodimerization may be required to stabilize the binding of ScpA to the Smc head domains. Component of a cohesin-like complex composed of ScpA, ScpB and the Smc homodimer, in which ScpA and ScpB bind to the head domain of Smc. The presence of the three proteins is required for the association of the complex with DNA.

It is found in the cytoplasm. Participates in chromosomal partition during cell division. May act via the formation of a condensin-like complex containing Smc and ScpA that pull DNA away from mid-cell into both cell halves. The sequence is that of Segregation and condensation protein B from Malacoplasma penetrans (strain HF-2) (Mycoplasma penetrans).